The chain runs to 1364 residues: DNA-directed RNA polymerase subunit beta' (1364 aa).

Residues C250, C317, C324, and C327 each coordinate Zn(2+). Residues 1318-1342 (TRHNIDPSASTNAAFTRPDVDNELK) form a disordered region.

This sequence belongs to the RNA polymerase beta' chain family. RpoC2 subfamily. As to quaternary structure, in cyanobacteria the RNAP catalytic core is composed of 2 alpha, 1 beta, 1 beta', 1 gamma and 1 omega subunit. When a sigma factor is associated with the core the holoenzyme is formed, which can initiate transcription. The cofactor is Zn(2+).

The catalysed reaction is RNA(n) + a ribonucleoside 5'-triphosphate = RNA(n+1) + diphosphate. Functionally, DNA-dependent RNA polymerase catalyzes the transcription of DNA into RNA using the four ribonucleoside triphosphates as substrates. In Synechococcus sp. (strain CC9902), this protein is DNA-directed RNA polymerase subunit beta'.